The sequence spans 917 residues: Alanine--tRNA ligase (917 aa).

Residues histidine 592, histidine 596, cysteine 694, and histidine 698 each coordinate Zn(2+).

The protein belongs to the class-II aminoacyl-tRNA synthetase family. Zn(2+) is required as a cofactor.

The protein localises to the cytoplasm. The enzyme catalyses tRNA(Ala) + L-alanine + ATP = L-alanyl-tRNA(Ala) + AMP + diphosphate. Functionally, catalyzes the attachment of alanine to tRNA(Ala) in a two-step reaction: alanine is first activated by ATP to form Ala-AMP and then transferred to the acceptor end of tRNA(Ala). Also edits incorrectly charged Ser-tRNA(Ala) and Gly-tRNA(Ala) via its editing domain. The polypeptide is Alanine--tRNA ligase (Sorangium cellulosum (strain So ce56) (Polyangium cellulosum (strain So ce56))).